The primary structure comprises 243 residues: Ubiquinone/menaquinone biosynthesis C-methyltransferase UbiE (243 aa).

Residues Thr69, Asp90, and 116 to 117 (DA) each bind S-adenosyl-L-methionine.

The protein belongs to the class I-like SAM-binding methyltransferase superfamily. MenG/UbiE family.

The enzyme catalyses a 2-demethylmenaquinol + S-adenosyl-L-methionine = a menaquinol + S-adenosyl-L-homocysteine + H(+). The catalysed reaction is a 2-methoxy-6-(all-trans-polyprenyl)benzene-1,4-diol + S-adenosyl-L-methionine = a 5-methoxy-2-methyl-3-(all-trans-polyprenyl)benzene-1,4-diol + S-adenosyl-L-homocysteine + H(+). Its pathway is quinol/quinone metabolism; menaquinone biosynthesis; menaquinol from 1,4-dihydroxy-2-naphthoate: step 2/2. It participates in cofactor biosynthesis; ubiquinone biosynthesis. Its function is as follows. Methyltransferase required for the conversion of demethylmenaquinol (DMKH2) to menaquinol (MKH2) and the conversion of 2-polyprenyl-6-methoxy-1,4-benzoquinol (DDMQH2) to 2-polyprenyl-3-methyl-6-methoxy-1,4-benzoquinol (DMQH2). The sequence is that of Ubiquinone/menaquinone biosynthesis C-methyltransferase UbiE from Burkholderia cenocepacia (strain ATCC BAA-245 / DSM 16553 / LMG 16656 / NCTC 13227 / J2315 / CF5610) (Burkholderia cepacia (strain J2315)).